A 143-amino-acid chain; its full sequence is Peptide methionine sulfoxide reductase MsrB (143 aa).

One can recognise a MsrB domain in the interval 16–139; sequence DAELRRRLTP…NSAALNFESR (124 aa). Positions 55, 58, 104, and 107 each coordinate Zn(2+). C128 functions as the Nucleophile in the catalytic mechanism.

This sequence belongs to the MsrB Met sulfoxide reductase family. Zn(2+) serves as cofactor.

The enzyme catalyses L-methionyl-[protein] + [thioredoxin]-disulfide + H2O = L-methionyl-(R)-S-oxide-[protein] + [thioredoxin]-dithiol. This Burkholderia cenocepacia (strain ATCC BAA-245 / DSM 16553 / LMG 16656 / NCTC 13227 / J2315 / CF5610) (Burkholderia cepacia (strain J2315)) protein is Peptide methionine sulfoxide reductase MsrB.